The sequence spans 583 residues: Secretogranin-2b (583 aa).

The N-terminal stretch at 1–28 (MMLSLPKLSAGGVVVLLATLLHTLTVQG) is a signal peptide. Disordered stretches follow at residues 123-159 (AGES…AGFV) and 526-583 (VDNG…VAGM). Over residues 534–546 (AKRDTQGKEEPEG) the composition is skewed to basic and acidic residues.

This sequence belongs to the chromogranin/secretogranin protein family.

The protein resides in the secreted. Functionally, neuroendocrine protein of the granin family that regulates the biogenesis of secretory granules. Required for neurovascular modeling of the hindbrain. Acts in a non-cell autonomous manner and is required for migration and proliferation of central artery endothelial cells. Required for normal courting behavior and spawning. In Danio rerio (Zebrafish), this protein is Secretogranin-2b.